The sequence spans 370 residues: Small ribosomal subunit biogenesis GTPase RsgA 1 (370 aa).

Positions 97-255 (QTQLDRPPIA…LADTPGFNQP (159 aa)) constitute a CP-type G domain. Residues 146–149 (NKSD) and 197–205 (GPSGVGKSS) each bind GTP. Positions 280, 285, 287, and 293 each coordinate Zn(2+). The segment at 325-370 (PESTLKLKTKGKGQSQYEPKLESKKYRRTSRRTQVQGLQDLYQEEE) is disordered.

This sequence belongs to the TRAFAC class YlqF/YawG GTPase family. RsgA subfamily. Monomer. Associates with 30S ribosomal subunit, binds 16S rRNA. Zn(2+) serves as cofactor.

The protein localises to the cytoplasm. In terms of biological role, one of several proteins that assist in the late maturation steps of the functional core of the 30S ribosomal subunit. Helps release RbfA from mature subunits. May play a role in the assembly of ribosomal proteins into the subunit. Circularly permuted GTPase that catalyzes slow GTP hydrolysis, GTPase activity is stimulated by the 30S ribosomal subunit. The sequence is that of Small ribosomal subunit biogenesis GTPase RsgA 1 from Nostoc sp. (strain PCC 7120 / SAG 25.82 / UTEX 2576).